Reading from the N-terminus, the 227-residue chain is ATP synthase F(0) complex subunit a (227 aa).

6 consecutive transmembrane segments (helical) span residues 12 to 32 (PYLM…LLFP), 69 to 89 (WALL…MGLL), 98 to 118 (QLSM…LIGL), 139 to 159 (IPIL…ALGV), 170 to 190 (LLIQ…PSIS), and 196 to 216 (ILLL…YVFV).

Belongs to the ATPase A chain family. As to quaternary structure, component of the ATP synthase complex composed at least of ATP5F1A/subunit alpha, ATP5F1B/subunit beta, ATP5MC1/subunit c (homooctomer), MT-ATP6/subunit a, MT-ATP8/subunit 8, ATP5ME/subunit e, ATP5MF/subunit f, ATP5MG/subunit g, ATP5MK/subunit k, ATP5MJ/subunit j, ATP5F1C/subunit gamma, ATP5F1D/subunit delta, ATP5F1E/subunit epsilon, ATP5PF/subunit F6, ATP5PB/subunit b, ATP5PD/subunit d, ATP5PO/subunit OSCP. ATP synthase complex consists of a soluble F(1) head domain (subunits alpha(3) and beta(3)) - the catalytic core - and a membrane F(0) domain - the membrane proton channel (subunits c, a, 8, e, f, g, k and j). These two domains are linked by a central stalk (subunits gamma, delta, and epsilon) rotating inside the F1 region and a stationary peripheral stalk (subunits F6, b, d, and OSCP). Interacts with DNAJC30; interaction is direct.

It is found in the mitochondrion inner membrane. It catalyses the reaction H(+)(in) = H(+)(out). Subunit a, of the mitochondrial membrane ATP synthase complex (F(1)F(0) ATP synthase or Complex V) that produces ATP from ADP in the presence of a proton gradient across the membrane which is generated by electron transport complexes of the respiratory chain. ATP synthase complex consist of a soluble F(1) head domain - the catalytic core - and a membrane F(1) domain - the membrane proton channel. These two domains are linked by a central stalk rotating inside the F(1) region and a stationary peripheral stalk. During catalysis, ATP synthesis in the catalytic domain of F(1) is coupled via a rotary mechanism of the central stalk subunits to proton translocation. With the subunit c (ATP5MC1), forms the proton-conducting channel in the F(0) domain, that contains two crucial half-channels (inlet and outlet) that facilitate proton movement from the mitochondrial intermembrane space (IMS) into the matrix. Protons are taken up via the inlet half-channel and released through the outlet half-channel, following a Grotthuss mechanism. The sequence is that of ATP synthase F(0) complex subunit a from Coturnix japonica (Japanese quail).